A 270-amino-acid chain; its full sequence is 4-hydroxy-tetrahydrodipicolinate reductase (270 aa).

NAD(+) contacts are provided by residues 11–16 and glutamate 37; that span reads GCQGRM. Arginine 38 is an NADP(+) binding site. NAD(+) is bound by residues 101-103 and 125-128; these read GTT and ASNF. The Proton donor/acceptor role is filled by histidine 158. Histidine 159 lines the (S)-2,3,4,5-tetrahydrodipicolinate pocket. The Proton donor role is filled by lysine 162. A (S)-2,3,4,5-tetrahydrodipicolinate-binding site is contributed by 168-169; it reads GT.

Belongs to the DapB family.

The protein resides in the cytoplasm. The enzyme catalyses (S)-2,3,4,5-tetrahydrodipicolinate + NAD(+) + H2O = (2S,4S)-4-hydroxy-2,3,4,5-tetrahydrodipicolinate + NADH + H(+). The catalysed reaction is (S)-2,3,4,5-tetrahydrodipicolinate + NADP(+) + H2O = (2S,4S)-4-hydroxy-2,3,4,5-tetrahydrodipicolinate + NADPH + H(+). Its pathway is amino-acid biosynthesis; L-lysine biosynthesis via DAP pathway; (S)-tetrahydrodipicolinate from L-aspartate: step 4/4. Functionally, catalyzes the conversion of 4-hydroxy-tetrahydrodipicolinate (HTPA) to tetrahydrodipicolinate. The protein is 4-hydroxy-tetrahydrodipicolinate reductase of Tolumonas auensis (strain DSM 9187 / NBRC 110442 / TA 4).